Here is a 468-residue protein sequence, read N- to C-terminus: MAAANDYIVRDIGLADYGRKEISIAETEMPGLMATRAEYGASQPLKGAKIAGSLHMTIQTAVLIETLKHLGADIRWVSCNIYSTQDHAAAAIAAAGIPVFAVKGETLTEYWDYTSKLFDWHDGGMPNMILDDGGDATMFVHLGLRAENGDTAFLDKPESEEEEVFFALLKKKLAEKPKGWFAGLADSIKGVSEETTTGVHRLYNLAKEGKLLFPAINVNDSVTKSKFDNLYGCKESLVDGIRRGTDVMMAGKVAMVAGFGDVGKGSAASLRNAGCRVLVSEIDPICALQAAMEGYEVVTMEEAAPRADIFVTATGNKDIITIEHMRAMKDRAIVCNIGHFDNEIQVAGLKNLKWQNIKPQVDEIEFADGHRIILLSEGRLVNLGNATGHPSFVMSASFTNQTLAQIELWTNPGKYERQVYTLPKTLDEKVAALHLEKIGVKLSKLRPDQAAYIGVSQNGPFKPEHYRY.

Residues Thr57, Asp132, and Glu194 each coordinate substrate. An NAD(+)-binding site is contributed by 195–197 (TTT). Substrate-binding residues include Lys224 and Asp228. Residues Asn229, 258–263 (GFGDVG), Glu281, Asn316, 337–339 (IGH), and Asn382 contribute to the NAD(+) site.

It belongs to the adenosylhomocysteinase family. The cofactor is NAD(+).

The protein localises to the cytoplasm. It carries out the reaction S-adenosyl-L-homocysteine + H2O = L-homocysteine + adenosine. The protein operates within amino-acid biosynthesis; L-homocysteine biosynthesis; L-homocysteine from S-adenosyl-L-homocysteine: step 1/1. May play a key role in the regulation of the intracellular concentration of adenosylhomocysteine. This is Adenosylhomocysteinase from Methylorubrum populi (strain ATCC BAA-705 / NCIMB 13946 / BJ001) (Methylobacterium populi).